A 210-amino-acid chain; its full sequence is NADH dehydrogenase [ubiquinone] iron-sulfur protein 8, mitochondrial (210 aa).

Residues 1–34 (MRCLTTPMLLRALAQAARAGPPCGRSLHSSAVAA) constitute a mitochondrion transit peptide. 4Fe-4S ferredoxin-type domains are found at residues 102 to 131 (RRYP…IEAE) and 141 to 170 (TRYD…EGPN). Residues C111, C114, C117, C121, C150, C153, C156, and C160 each contribute to the [4Fe-4S] cluster site.

It belongs to the complex I 23 kDa subunit family. As to quaternary structure, core subunit of respiratory chain NADH dehydrogenase (Complex I) which is composed of 45 different subunits. This is a component of the iron-sulfur (IP) fragment of the enzyme. Interacts with RAB5IF. Requires [4Fe-4S] cluster as cofactor.

It localises to the mitochondrion inner membrane. The enzyme catalyses a ubiquinone + NADH + 5 H(+)(in) = a ubiquinol + NAD(+) + 4 H(+)(out). Its function is as follows. Core subunit of the mitochondrial membrane respiratory chain NADH dehydrogenase (Complex I) which catalyzes electron transfer from NADH through the respiratory chain, using ubiquinone as an electron acceptor. Essential for the catalytic activity and assembly of complex I. This chain is NADH dehydrogenase [ubiquinone] iron-sulfur protein 8, mitochondrial (NDUFS8), found in Pongo abelii (Sumatran orangutan).